The following is a 76-amino-acid chain: uncharacterized protein (76 aa).

The segment at 36–41 is required for interaction with PPP3CA; that stretch reads PDIIIT. A phosphothreonine mark is found at Thr-44 and Thr-46.

Interacts (via PxIxIT motif, when phosphorylated on Thr-44) with PPP3CA. In terms of tissue distribution, not expressed in pancreatic duct cells (at protein level). Abundantly expressed in the pancreas and weakly expressed in the thyroid. Not expressed in pancreatic duct cells (at protein level). Abundantly expressed in the lymph node and weakly expressed in the stomach, trachea and bone marrow.

This is an uncharacterized protein from Homo sapiens (Human).